Here is a 130-residue protein sequence, read N- to C-terminus: Large ribosomal subunit protein eL22 (130 aa).

It belongs to the eukaryotic ribosomal protein eL22 family.

The protein is Large ribosomal subunit protein eL22 (rpl-22) of Caenorhabditis elegans.